Reading from the N-terminus, the 57-residue chain is uncharacterized protein (57 aa).

Positions 1-22 (MNEIIITIIVLILLLFITLSRN) are cleaved as a signal peptide. Residues 26-57 (NNQSNNGKKEKLIKCKKEVQQLRQKLDQLTFQ) adopt a coiled-coil conformation.

This is an uncharacterized protein from Acheta domesticus (House cricket).